The chain runs to 292 residues: Homoserine kinase (292 aa).

84–94 (PLARGMGSSSA) provides a ligand contact to ATP.

The protein belongs to the GHMP kinase family. Homoserine kinase subfamily.

Its subcellular location is the cytoplasm. The enzyme catalyses L-homoserine + ATP = O-phospho-L-homoserine + ADP + H(+). It functions in the pathway amino-acid biosynthesis; L-threonine biosynthesis; L-threonine from L-aspartate: step 4/5. Its function is as follows. Catalyzes the ATP-dependent phosphorylation of L-homoserine to L-homoserine phosphate. This chain is Homoserine kinase, found in Thermus thermophilus (strain ATCC 27634 / DSM 579 / HB8).